A 1188-amino-acid polypeptide reads, in one-letter code: DNA polymerase (1188 aa).

The segment at 1–74 (MALVPSPRAG…PAANNVSLTP (74 aa)) is disordered. Low complexity predominate over residues 31-41 (STAGAAPTATR).

It belongs to the DNA polymerase type-B family. As to quaternary structure, heterodimer with the terminal protein; this heterodimer binds to bp 9 to 18 of the genome. Forms a complex with viral pTP, DBP and hosts NFIA and POU2F1/OCT1 for initiation of replication.

It localises to the host nucleus. It catalyses the reaction DNA(n) + a 2'-deoxyribonucleoside 5'-triphosphate = DNA(n+1) + diphosphate. In terms of biological role, eukaryotic-type DNA polymerase involved in viral genomic replication. DNA synthesis is protein primed, and acts in a strand displacement replication. Assembles in complex with viral pTP, DBP, host NFIA and host POU2F1/OCT1 on viral origin of replication. The polymerase covalently transfers dCMP onto pTP, thereby initiating complementary strand synthesis. The protein is DNA polymerase of Human adenovirus F serotype 40 (HAdV-40).